A 236-amino-acid chain; its full sequence is Small ribosomal subunit protein uS2c (236 aa).

It belongs to the universal ribosomal protein uS2 family.

It is found in the plastid. It localises to the chloroplast. The chain is Small ribosomal subunit protein uS2c (rps2) from Olimarabidopsis pumila (Dwarf rocket).